The chain runs to 178 residues: ATP-dependent protease subunit HslV (178 aa).

The active site involves threonine 7. Residues glycine 162, cysteine 165, and threonine 168 each contribute to the Na(+) site.

This sequence belongs to the peptidase T1B family. HslV subfamily. In terms of assembly, a double ring-shaped homohexamer of HslV is capped on each side by a ring-shaped HslU homohexamer. The assembly of the HslU/HslV complex is dependent on binding of ATP.

It is found in the cytoplasm. The catalysed reaction is ATP-dependent cleavage of peptide bonds with broad specificity.. With respect to regulation, allosterically activated by HslU binding. In terms of biological role, protease subunit of a proteasome-like degradation complex believed to be a general protein degrading machinery. This is ATP-dependent protease subunit HslV from Janthinobacterium sp. (strain Marseille) (Minibacterium massiliensis).